The sequence spans 115 residues: Holo-[acyl-carrier-protein] synthase (115 aa).

Mg(2+)-binding residues include Asp-8 and Glu-50.

The protein belongs to the P-Pant transferase superfamily. AcpS family. It depends on Mg(2+) as a cofactor.

Its subcellular location is the cytoplasm. It catalyses the reaction apo-[ACP] + CoA = holo-[ACP] + adenosine 3',5'-bisphosphate + H(+). Functionally, transfers the 4'-phosphopantetheine moiety from coenzyme A to a Ser of acyl-carrier-protein. This is Holo-[acyl-carrier-protein] synthase from Arthrobacter sp. (strain FB24).